The sequence spans 372 residues: tRNA-specific 2-thiouridylase MnmA (372 aa).

ATP-binding positions include 13-20 and Met-39; that span reads GMSGGVDS. Residues 99–101 form an interaction with target base in tRNA region; sequence NPD. Cys-104 acts as the Nucleophile in catalysis. A disulfide bridge links Cys-104 with Cys-200. Gly-128 serves as a coordination point for ATP. The interaction with tRNA stretch occupies residues 150-152; it reads KDQ. Catalysis depends on Cys-200, which acts as the Cysteine persulfide intermediate. Positions 310–311 are interaction with tRNA; that stretch reads RY.

This sequence belongs to the MnmA/TRMU family.

The protein resides in the cytoplasm. The enzyme catalyses S-sulfanyl-L-cysteinyl-[protein] + uridine(34) in tRNA + AH2 + ATP = 2-thiouridine(34) in tRNA + L-cysteinyl-[protein] + A + AMP + diphosphate + H(+). Catalyzes the 2-thiolation of uridine at the wobble position (U34) of tRNA, leading to the formation of s(2)U34. The chain is tRNA-specific 2-thiouridylase MnmA from Bacillus licheniformis (strain ATCC 14580 / DSM 13 / JCM 2505 / CCUG 7422 / NBRC 12200 / NCIMB 9375 / NCTC 10341 / NRRL NRS-1264 / Gibson 46).